Here is a 278-residue protein sequence, read N- to C-terminus: Probable ribosomal RNA small subunit methyltransferase A (278 aa).

Positions 25, 27, 52, 73, 98, and 114 each coordinate S-adenosyl-L-methionine.

The protein belongs to the class I-like SAM-binding methyltransferase superfamily. rRNA adenine N(6)-methyltransferase family. RsmA subfamily.

The protein localises to the cytoplasm. In terms of biological role, specifically dimethylates two adjacent adenosines in the loop of a conserved hairpin near the 3'-end of 16S rRNA in the 30S particle. May play a critical role in biogenesis of 30S subunits. The sequence is that of Probable ribosomal RNA small subunit methyltransferase A from Methanopyrus kandleri (strain AV19 / DSM 6324 / JCM 9639 / NBRC 100938).